Reading from the N-terminus, the 331-residue chain is Holliday junction branch migration complex subunit RuvB (331 aa).

Residues 1-171 (MTEPLDAALR…FGIIEHLEYY (171 aa)) are large ATPase domain (RuvB-L). ATP-binding positions include Leu9, Arg10, Gly51, Lys54, Thr55, Thr56, 118–120 (EDF), Arg161, Tyr171, and Arg208. Thr55 serves as a coordination point for Mg(2+). Residues 172–242 (TPEEIGTNLL…RAQDALDKLG (71 aa)) are small ATPAse domain (RuvB-S). Residues 245–331 (TAGLDERDKK…AESDLGLYTN (87 aa)) form a head domain (RuvB-H) region. Arg300 and Arg305 together coordinate DNA.

The protein belongs to the RuvB family. As to quaternary structure, homohexamer. Forms an RuvA(8)-RuvB(12)-Holliday junction (HJ) complex. HJ DNA is sandwiched between 2 RuvA tetramers; dsDNA enters through RuvA and exits via RuvB. An RuvB hexamer assembles on each DNA strand where it exits the tetramer. Each RuvB hexamer is contacted by two RuvA subunits (via domain III) on 2 adjacent RuvB subunits; this complex drives branch migration. In the full resolvosome a probable DNA-RuvA(4)-RuvB(12)-RuvC(2) complex forms which resolves the HJ.

It localises to the cytoplasm. It carries out the reaction ATP + H2O = ADP + phosphate + H(+). In terms of biological role, the RuvA-RuvB-RuvC complex processes Holliday junction (HJ) DNA during genetic recombination and DNA repair, while the RuvA-RuvB complex plays an important role in the rescue of blocked DNA replication forks via replication fork reversal (RFR). RuvA specifically binds to HJ cruciform DNA, conferring on it an open structure. The RuvB hexamer acts as an ATP-dependent pump, pulling dsDNA into and through the RuvAB complex. RuvB forms 2 homohexamers on either side of HJ DNA bound by 1 or 2 RuvA tetramers; 4 subunits per hexamer contact DNA at a time. Coordinated motions by a converter formed by DNA-disengaged RuvB subunits stimulates ATP hydrolysis and nucleotide exchange. Immobilization of the converter enables RuvB to convert the ATP-contained energy into a lever motion, pulling 2 nucleotides of DNA out of the RuvA tetramer per ATP hydrolyzed, thus driving DNA branch migration. The RuvB motors rotate together with the DNA substrate, which together with the progressing nucleotide cycle form the mechanistic basis for DNA recombination by continuous HJ branch migration. Branch migration allows RuvC to scan DNA until it finds its consensus sequence, where it cleaves and resolves cruciform DNA. This is Holliday junction branch migration complex subunit RuvB from Deinococcus geothermalis (strain DSM 11300 / CIP 105573 / AG-3a).